The chain runs to 271 residues: Regulatory protein RecX (271 aa).

Belongs to the RecX family.

Its subcellular location is the cytoplasm. Functionally, modulates RecA activity. The chain is Regulatory protein RecX from Geobacillus sp. (strain WCH70).